Consider the following 235-residue polypeptide: Small ribosomal subunit protein uS3 (235 aa).

A KH type-2 domain is found at 39-107 (IRTYIENELK…ETHLNIVEVR (69 aa)). Positions 215–235 (SERRAVEGAGDGGGQRRRENA) are disordered.

This sequence belongs to the universal ribosomal protein uS3 family. Part of the 30S ribosomal subunit. Forms a tight complex with proteins S10 and S14.

Binds the lower part of the 30S subunit head. Binds mRNA in the 70S ribosome, positioning it for translation. This chain is Small ribosomal subunit protein uS3, found in Chelativorans sp. (strain BNC1).